Consider the following 166-residue polypeptide: Regulatory protein RecX (166 aa).

Belongs to the RecX family.

The protein localises to the cytoplasm. Its function is as follows. Modulates RecA activity. This is Regulatory protein RecX from Shigella boydii serotype 4 (strain Sb227).